The following is an 852-amino-acid chain: MAHVNNYLLVTLLLISIYGYMGKNFVTVFYGIPAWKNASIPLFCATRNRDTWGTVQCLPDNDDYTEIQLNITEAFDAWDNTVTDQATKDVWSLFETSIKPCVKLTPLCVTMKCNKTWSSASKETTTSSASLRSSTQTLLNEDSKCIQNDSCAGIGLEEMIDCQFKMTGLKRDESKQYKDTWYKQDLVCEKGTRSNESKCYIKTCNTSIIQESCDKHYWDSLRFRYCAPPGFALLRCNDTKYSGFMPNCSKVVVSLYRMMETQTSTWFGFNGTRAENRTYIYWHGKDNRTIISLNSYYNLTMHCKRPGNKMVVPIRTVSGILFHSQPINKRPKQAWCWFKGNWTEAIQEVKETIKNHPRYSGTTNISQIRLAEHARSSDPEVRYMWTNCRGEFLYCNMTFFLNWVENRTGLKRNYASCHIRQIVNTWHKIGRNVYLPPREGELSCNSTVTSLIANIDWIDKNLTNITVSAEVSELYKLELGDYKLVEITPIGFAPTSIKRYSSVTPRNKRGVLVLGFLGFLATAGSAMGAASLTLSAQSRTLLAGIVQQQQQLVDVVKRQQELLRLTVWGTKNLQARVTAIEKYLKDQAQLNSWGCAFRQVCHTTVPWVNESLKPDWNNMTWQQWERQVRFLDANITKLLEEAQIQQEKNMYELQKLNQWDIFSNWFDFTSWMAYIRLGLYIVIGIVVLRIAIYIIQMLARLRKGYRPVFSSPPSYTQQIPIRKDRGQPANEETEEGGGNNEGYRSWPWQIEYIHFPIRQLRDLLIWLYSGCRTLLSKTFQTLQPVLQPLRLPPAYLRYGISWFQEAIQAAARAAGETLASAARTSWGVLRRAAGEIIAIPRRIRQGAELALL.

The N-terminal stretch at 1-24 (MAHVNNYLLVTLLLISIYGYMGKN) is a signal peptide. The Extracellular portion of the chain corresponds to 25–677 (FVTVFYGIPA…FTSWMAYIRL (653 aa)). Asn-37 carries an N-linked (GlcNAc...) asparagine; by host glycan. Cys-44 and Cys-57 are joined by a disulfide. Asn-70, Asn-114, Asn-148, Asn-195, Asn-205, Asn-237, Asn-247, Asn-270, Asn-276, Asn-287, and Asn-298 each carry an N-linked (GlcNAc...) asparagine; by host glycan. 4 cysteine pairs are disulfide-bonded: Cys-101–Cys-213, Cys-108–Cys-204, Cys-113–Cys-162, and Cys-236–Cys-248. The V1 stretch occupies residues 113–161 (CNKTWSSASKETTTSSASLRSSTQTLLNEDSKCIQNDSCAGIGLEEMID). The tract at residues 162-204 (CQFKMTGLKRDESKQYKDTWYKQDLVCEKGTRSNESKCYIKTC) is V2. Residues 303-335 (CKRPGNKMVVPIRTVSGILFHSQPINKRPKQAW) form a V3 region. A disulfide bridge links Cys-303 with Cys-336. N-linked (GlcNAc...) asparagine; by host glycans are attached at residues Asn-341, Asn-364, Asn-396, Asn-406, Asn-445, Asn-461, and Asn-464. Cystine bridges form between Cys-388/Cys-444 and Cys-395/Cys-417. A V4 region spans residues 395–417 (CNMTFFLNWVENRTGLKRNYASC). The interval 461-467 (NLTNITV) is V5. Residues 510 to 530 (GVLVLGFLGFLATAGSAMGAA) are fusion peptide. Residues 573–589 (LQARVTAIEKYLKDQAQ) are immunosuppression. N-linked (GlcNAc...) asparagine; by host glycosylation is found at Asn-609, Asn-618, and Asn-634. Residues 622–648 (QQWERQVRFLDANITKLLEEAQIQQEK) adopt a coiled-coil conformation. The MPER; binding to GalCer stretch occupies residues 655–676 (KLNQWDIFSNWFDFTSWMAYIR). Residues 678-698 (GLYIVIGIVVLRIAIYIIQML) traverse the membrane as a helical segment. Topologically, residues 699-852 (ARLRKGYRPV…IRQGAELALL (154 aa)) are cytoplasmic. The short motif at 705–708 (YRPV) is the YXXV motif; contains endocytosis signal element. The segment at 713–740 (PSYTQQIPIRKDRGQPANEETEEGGGNN) is disordered. A lipid anchor (S-palmitoyl cysteine; by host) is attached at Cys-771. Residues 851 to 852 (LL) carry the Di-leucine internalization motif motif.

In terms of assembly, the mature envelope protein (Env) consists of a homotrimer of non-covalently associated gp120-gp41 heterodimers. The resulting complex protrudes from the virus surface as a spike. There seems to be as few as 10 spikes on the average virion. Interacts with human CD4, CCR5 and CXCR4, to form a P4HB/PDI-CD4-CXCR4-gp120 complex. Gp120 also interacts with the C-type lectins CD209/DC-SIGN and CLEC4M/DC-SIGNR (collectively referred to as DC-SIGN(R)). Gp120 and gp41 interact with GalCer. The mature envelope protein (Env) consists of a homotrimer of non-covalently associated gp120-gp41 heterodimers. The resulting complex protrudes from the virus surface as a spike. There seems to be as few as 10 spikes on the average virion. In terms of processing, specific enzymatic cleavages in vivo yield mature proteins. Envelope glycoproteins are synthesized as an inactive precursor that is heavily N-glycosylated and processed likely by host cell furin in the Golgi to yield the mature SU and TM proteins. The cleavage site between SU and TM requires the minimal sequence [KR]-X-[KR]-R. Palmitoylation of the transmembrane protein and of Env polyprotein (prior to its proteolytic cleavage) is essential for their association with host cell membrane lipid rafts. Palmitoylation is therefore required for envelope trafficking to classical lipid rafts, but not for viral replication.

The protein localises to the virion membrane. The protein resides in the host cell membrane. It localises to the host endosome membrane. In terms of biological role, the surface protein gp120 (SU) attaches the virus to the host lymphoid cell by binding to the primary receptor CD4. This interaction induces a structural rearrangement creating a high affinity binding site for a chemokine coreceptor like CXCR4 and/or CCR5. This peculiar 2 stage receptor-interaction strategy allows gp120 to maintain the highly conserved coreceptor-binding site in a cryptic conformation, protected from neutralizing antibodies. Since CD4 also displays a binding site for the disulfide-isomerase P4HB/PDI, a P4HB/PDI-CD4-CXCR4-gp120 complex may form. In that complex, P4HB/PDI could reach and reduce gp120 disulfide bonds, causing major conformational changes in gp120. TXN, another PDI family member could also be involved in disulfide rearrangements in Env during fusion. These changes are transmitted to the transmembrane protein gp41 and are thought to activate its fusogenic potential by unmasking its fusion peptide. The surface protein gp120 is a ligand for CD209/DC-SIGN and CLEC4M/DC-SIGNR, which are respectively found on dendritic cells (DCs), and on endothelial cells of liver sinusoids and lymph node sinuses. These interactions allow capture of viral particles at mucosal surfaces by these cells and subsequent transmission to permissive cells. DCs are professional antigen presenting cells, critical for host immunity by inducing specific immune responses against a broad variety of pathogens. They act as sentinels in various tissues where they take up antigen, process it, and present it to T-cells following migration to lymphoid organs. HIV subverts the migration properties of dendritic cells to gain access to CD4+ T-cells in lymph nodes. Virus transmission to permissive T-cells occurs either in trans (without DCs infection, through viral capture and transmission), or in cis (following DCs productive infection, through the usual CD4-gp120 interaction), thereby inducing a robust infection. In trans infection, bound virions remain infectious over days and it is proposed that they are not degraded, but protected in non-lysosomal acidic organelles within the DCs close to the cell membrane thus contributing to the viral infectious potential during DCs' migration from the periphery to the lymphoid tissues. On arrival at lymphoid tissues, intact virions recycle back to DCs' cell surface allowing virus transmission to CD4+ T-cells. Virion capture also seems to lead to MHC-II-restricted viral antigen presentation, and probably to the activation of HIV-specific CD4+ cells. Functionally, the transmembrane protein gp41 (TM) acts as a class I viral fusion protein. Under the current model, the protein has at least 3 conformational states: pre-fusion native state, pre-hairpin intermediate state, and post-fusion hairpin state. During fusion of viral and target intracellular membranes, the coiled coil regions (heptad repeats) assume a trimer-of-hairpins structure, positioning the fusion peptide in close proximity to the C-terminal region of the ectodomain. The formation of this structure appears to drive apposition and subsequent fusion of viral and target cell membranes. Complete fusion occurs in host cell endosomes and is dynamin-dependent, however some lipid transfer might occur at the plasma membrane. The virus undergoes clathrin-dependent internalization long before endosomal fusion, thus minimizing the surface exposure of conserved viral epitopes during fusion and reducing the efficacy of inhibitors targeting these epitopes. Membranes fusion leads to delivery of the nucleocapsid into the cytoplasm. Its function is as follows. The envelope glycoprotein gp160 precursor down-modulates cell surface CD4 antigen by interacting with it in the endoplasmic reticulum and blocking its transport to the cell surface. In terms of biological role, the gp120-gp41 heterodimer seems to contribute to T-cell depletion during HIV-1 infection. The envelope glycoproteins expressed on the surface of infected cells induce apoptosis through an interaction with uninfected cells expressing the receptor (CD4) and the coreceptors CXCR4 or CCR5. This type of bystander killing may be obtained by at least three distinct mechanisms. First, the interaction between the 2 cells can induce cellular fusion followed by nuclear fusion within the syncytium. Syncytia are condemned to die from apoptosis. Second, the 2 interacting cells may not fuse entirely and simply exchange plasma membrane lipids, after a sort of hemifusion process, followed by rapid death. Third, it is possible that virus-infected cells, on the point of undergoing apoptosis, fuse with CD4-expressing cells, in which case apoptosis is rapidly transmitted from one cell to the other and thus occurs in a sort of contagious fashion. The gp120-gp41 heterodimer allows rapid transcytosis of the virus through CD4 negative cells such as simple epithelial monolayers of the intestinal, rectal and endocervical epithelial barriers. Both gp120 and gp41 specifically recognize glycosphingolipids galactosyl-ceramide (GalCer) or 3' sulfo-galactosyl-ceramide (GalS) present in the lipid rafts structures of epithelial cells. Binding to these alternative receptors allows the rapid transcytosis of the virus through the epithelial cells. This transcytotic vesicle-mediated transport of virions from the apical side to the basolateral side of the epithelial cells does not involve infection of the cells themselves. This chain is Envelope glycoprotein gp160 (env), found in Human immunodeficiency virus type 2 subtype B (isolate EHO) (HIV-2).